Reading from the N-terminus, the 445-residue chain is Ribosomal protein uS12 methylthiotransferase RimO (445 aa).

The 111-residue stretch at 11–121 (PKISFVSLGC…VLDAVHRASP (111 aa)) folds into the MTTase N-terminal domain. [4Fe-4S] cluster-binding residues include C20, C56, C85, C152, C156, and C159. One can recognise a Radical SAM core domain in the interval 138-375 (LTPRHYAYLK…MARQQKISAR (238 aa)). One can recognise a TRAM domain in the interval 378 to 444 (KRKVGTRQQI…EYDLHGTVAG (67 aa)).

This sequence belongs to the methylthiotransferase family. RimO subfamily. Requires [4Fe-4S] cluster as cofactor.

It localises to the cytoplasm. It carries out the reaction L-aspartate(89)-[ribosomal protein uS12]-hydrogen + (sulfur carrier)-SH + AH2 + 2 S-adenosyl-L-methionine = 3-methylsulfanyl-L-aspartate(89)-[ribosomal protein uS12]-hydrogen + (sulfur carrier)-H + 5'-deoxyadenosine + L-methionine + A + S-adenosyl-L-homocysteine + 2 H(+). Catalyzes the methylthiolation of an aspartic acid residue of ribosomal protein uS12. In Bradyrhizobium sp. (strain ORS 278), this protein is Ribosomal protein uS12 methylthiotransferase RimO.